The following is a 486-amino-acid chain: Nucleolar protein 56 (486 aa).

In terms of domain architecture, Nop spans 298–416 (CAPSLSALIG…VEDRLEYFTS (119 aa)). Positions 450-486 (KKAKRLAEESVTATAEAEVDEDAPKPKKKKKSKAGDE) are disordered. Residues 475 to 486 (PKKKKKSKAGDE) show a composition bias toward basic residues.

The protein belongs to the NOP5/NOP56 family.

The protein resides in the nucleus. The protein localises to the nucleolus. Required for 60S ribosomal subunit synthesis. The polypeptide is Nucleolar protein 56 (Caenorhabditis elegans).